The primary structure comprises 330 residues: Membrane progestin receptor gamma (330 aa).

Topologically, residues 1-51 (MLSLKLPRLFSIDQIPQVFHEQGILFGYRHPQSSATACILSLFQMTNETLN) are cytoplasmic. The helical transmembrane segment at 52-72 (IWTHLLPFWFFAWRFVTALYM) threads the bilayer. Residues 73–80 (TDIKNDSY) are Extracellular-facing. A helical membrane pass occupies residues 81–101 (SWPMLVYMCTSCVYPLVSSCA). Topologically, residues 102-113 (HTFSSMSKNARH) are cytoplasmic. A helical transmembrane segment spans residues 114-134 (ICYFLDYGAVNLFSLGSAIAY). The Extracellular portion of the chain corresponds to 135–141 (SAYTFPD). A helical transmembrane segment spans residues 142 to 162 (ALMCTTFHDYYVALAVLNTIL). The Cytoplasmic portion of the chain corresponds to 163-186 (STGLSCYSRFLEIQKPRLCKVIRV). Residues 187-207 (LAFAYPYTWDSLPIFYRLFLF) form a helical membrane-spanning segment. At 208 to 253 (PGESAQNEATSYHQKHMIMTLLASFLYSAHLPERLAPGRFDYIGHS) the chain is on the extracellular side. Residues 254–274 (HQLFHVCVILATHMQMEAILL) form a helical membrane-spanning segment. The Cytoplasmic segment spans residues 275 to 294 (DKTLRKEWLLATSKPFSFSQ). Residues 295 to 315 (IAGAILLCIIFSLSNIIYFSA) traverse the membrane as a helical segment. Over 316–330 (ALYRIPKPELHKKET) the chain is Extracellular.

The protein belongs to the ADIPOR family. In terms of tissue distribution, expressed in the brain, lung, kidney, colon, adrenal and lung.

Its subcellular location is the cell membrane. In terms of biological role, plasma membrane progesterone (P4) receptor coupled to G proteins. Seems to act through a G(i) mediated pathway. May be involved in oocyte maturation. This is Membrane progestin receptor gamma from Homo sapiens (Human).